A 1085-amino-acid polypeptide reads, in one-letter code: Carbamoyl phosphate synthase large chain (1085 aa).

The carboxyphosphate synthetic domain stretch occupies residues 1-399 (MPKRTDISNI…ALQKALCSLE (399 aa)). The ATP site is built by R127, R167, G174, E206, L208, E213, G239, V240, H241, Q283, and E297. Residues 131-326 (KEAMLKIGMD…IAKVATMLAV (196 aa)) form the ATP-grasp 1 domain. Residues Q283, E297, and N299 each contribute to the Mg(2+) site. 3 residues coordinate Mn(2+): Q283, E297, and N299. The tract at residues 400–551 (NNWLGFESLS…YAPNPLPPIG (152 aa)) is oligomerization domain. Residues 552 to 951 (NKQEKQEKKI…AFFKAQTACF (400 aa)) are carbamoyl phosphate synthetic domain. Positions 678–871 (SLFLKELDIK…LAKVATRVMV (194 aa)) constitute an ATP-grasp 2 domain. ATP is bound by residues R714, K756, L758, E763, G788, I789, H790, S791, Q830, and E842. 3 residues coordinate Mg(2+): Q830, E842, and N844. Q830, E842, and N844 together coordinate Mn(2+). Residues 952-1085 (NPIKNKGLIF…ELLALQDYLK (134 aa)) enclose the MGS-like domain. The allosteric domain stretch occupies residues 952 to 1085 (NPIKNKGLIF…ELLALQDYLK (134 aa)).

Belongs to the CarB family. As to quaternary structure, composed of two chains; the small (or glutamine) chain promotes the hydrolysis of glutamine to ammonia, which is used by the large (or ammonia) chain to synthesize carbamoyl phosphate. Tetramer of heterodimers (alpha,beta)4. It depends on Mg(2+) as a cofactor. Mn(2+) serves as cofactor.

It carries out the reaction hydrogencarbonate + L-glutamine + 2 ATP + H2O = carbamoyl phosphate + L-glutamate + 2 ADP + phosphate + 2 H(+). The catalysed reaction is hydrogencarbonate + NH4(+) + 2 ATP = carbamoyl phosphate + 2 ADP + phosphate + 2 H(+). It functions in the pathway amino-acid biosynthesis; L-arginine biosynthesis; carbamoyl phosphate from bicarbonate: step 1/1. It participates in pyrimidine metabolism; UMP biosynthesis via de novo pathway; (S)-dihydroorotate from bicarbonate: step 1/3. Its function is as follows. Large subunit of the glutamine-dependent carbamoyl phosphate synthetase (CPSase). CPSase catalyzes the formation of carbamoyl phosphate from the ammonia moiety of glutamine, carbonate, and phosphate donated by ATP, constituting the first step of 2 biosynthetic pathways, one leading to arginine and/or urea and the other to pyrimidine nucleotides. The large subunit (synthetase) binds the substrates ammonia (free or transferred from glutamine from the small subunit), hydrogencarbonate and ATP and carries out an ATP-coupled ligase reaction, activating hydrogencarbonate by forming carboxy phosphate which reacts with ammonia to form carbamoyl phosphate. The polypeptide is Carbamoyl phosphate synthase large chain (Helicobacter pylori (strain J99 / ATCC 700824) (Campylobacter pylori J99)).